Reading from the N-terminus, the 69-residue chain is Large ribosomal subunit protein bL31 (69 aa).

Positions 16, 18, 37, and 40 each coordinate Zn(2+).

It belongs to the bacterial ribosomal protein bL31 family. Type A subfamily. In terms of assembly, part of the 50S ribosomal subunit. Requires Zn(2+) as cofactor.

In terms of biological role, binds the 23S rRNA. The protein is Large ribosomal subunit protein bL31 of Buchnera aphidicola subsp. Baizongia pistaciae (strain Bp).